Here is a 499-residue protein sequence, read N- to C-terminus: Phenylalanine--tRNA ligase alpha subunit (499 aa).

L-phenylalanine contacts are provided by residues T342, 381–383 (QID), and F422. E424 contacts Mg(2+). Residue F447 participates in L-phenylalanine binding.

It belongs to the class-II aminoacyl-tRNA synthetase family. Phe-tRNA synthetase alpha subunit type 2 subfamily. In terms of assembly, tetramer of two alpha and two beta subunits. Requires Mg(2+) as cofactor.

It localises to the cytoplasm. It catalyses the reaction tRNA(Phe) + L-phenylalanine + ATP = L-phenylalanyl-tRNA(Phe) + AMP + diphosphate + H(+). The protein is Phenylalanine--tRNA ligase alpha subunit of Pyrococcus furiosus (strain ATCC 43587 / DSM 3638 / JCM 8422 / Vc1).